The sequence spans 235 residues: 2-C-methyl-D-erythritol 4-phosphate cytidylyltransferase (235 aa).

This sequence belongs to the IspD/TarI cytidylyltransferase family. IspD subfamily.

The catalysed reaction is 2-C-methyl-D-erythritol 4-phosphate + CTP + H(+) = 4-CDP-2-C-methyl-D-erythritol + diphosphate. Its pathway is isoprenoid biosynthesis; isopentenyl diphosphate biosynthesis via DXP pathway; isopentenyl diphosphate from 1-deoxy-D-xylulose 5-phosphate: step 2/6. Its function is as follows. Catalyzes the formation of 4-diphosphocytidyl-2-C-methyl-D-erythritol from CTP and 2-C-methyl-D-erythritol 4-phosphate (MEP). This is 2-C-methyl-D-erythritol 4-phosphate cytidylyltransferase from Pseudomonas fluorescens (strain SBW25).